Consider the following 344-residue polypeptide: Gibberellin receptor GID1C (344 aa).

The residue at position 2 (A2) is an N-acetylalanine. Positions 111 to 113 match the Involved in the stabilization of the negatively charged intermediate by the formation of the oxyanion hole motif; the sequence is HGG. Residues 113–114, Y125, and S189 each bind gibberellin A4; that span reads GS. Residues S114, Y125, S189, and F236 each contribute to the gibberellin A3 site. The active site involves S189. Residue D287 is part of the active site. A gibberellin A4-binding site is contributed by G318. G318 is a gibberellin A3 binding site.

It belongs to the 'GDXG' lipolytic enzyme family. As to quaternary structure, interacts with the DELLA proteins GAI, RGA, RGL1, RGL2 and RGL3 in a GA-dependent manner. In terms of tissue distribution, widely expressed.

The protein resides in the nucleus. In terms of biological role, functions as a soluble gibberellin (GA) receptor. GA is an essential hormone that regulates growth and development in plants. Binds with high affinity the biologically active gibberellin GA4, but has no affinity for the biologically inactive GAs. In response to GA, interacts with specific DELLA proteins, known as repressors of GA-induced growth, and targets them for degradation via proteasome. Seems to be required for GA signaling that controls root growth, seed germination and stem elongation. Partially redundant with GID1A and GID1B. The chain is Gibberellin receptor GID1C (GID1C) from Arabidopsis thaliana (Mouse-ear cress).